The following is a 576-amino-acid chain: uncharacterized protein (576 aa).

Topologically, residues M1 to A8 are cytoplasmic. The helical transmembrane segment at I9–V29 threads the bilayer. Residues A30 to N45 are Extracellular-facing. The helical transmembrane segment at M46–W66 threads the bilayer. Topologically, residues R67–E71 are cytoplasmic. Residues I72 to F92 form a helical membrane-spanning segment. Residues T93–F103 are Extracellular-facing. The helical transmembrane segment at F104–I124 threads the bilayer. The Cytoplasmic portion of the chain corresponds to Q125–G141. A helical membrane pass occupies residues V142–W162. Residues R163 to S400 are Extracellular-facing. The chain crosses the membrane as a helical span at residues L401–T421. Topologically, residues T422–N437 are cytoplasmic. The helical transmembrane segment at F438–L458 threads the bilayer. Residues G459–K476 lie on the Extracellular side of the membrane. The chain crosses the membrane as a helical span at residues S477 to V497. Over N498–K512 the chain is Cytoplasmic. A helical membrane pass occupies residues F513–F533. Residues Y534 to N545 lie on the Extracellular side of the membrane. The chain crosses the membrane as a helical span at residues C546 to V566. Topologically, residues T567–V576 are cytoplasmic.

The protein belongs to the auxin efflux carrier (TC 2.A.69) family.

It localises to the membrane. This is an uncharacterized protein from Saccharomyces cerevisiae (strain ATCC 204508 / S288c) (Baker's yeast).